A 344-amino-acid chain; its full sequence is MTRLTLALDVMGGDFGPSVTVPAALQALNSNSQLTLLLVGNPDTITPLLAKADFEQRSRLQIIPAQSVIASDARPSHAIRNSRGTSMRIALELVKEGRAEACVSAGNTGALMGLAKLMLKPIQGIERPALVTVLPHQQKGKTVVLDLGANVDCDSTMLAQFAIMGSVLAEEVVGISNPRVALLNIGEEETKGLDSIREAAELLKSAPSINYIGYLEANELLTGKTDVLVCDGFTGNVTLKTMEGVVRMFLSLLKSQGEGKKTAWWLILLKRWLQKSLTRRFSHLNPDQYNGACLLGLRGTVIKSHGAANQRAFTVAIEQAVQAVQRQVPQRIAARLESVLAKSD.

This sequence belongs to the PlsX family. As to quaternary structure, homodimer. Probably interacts with PlsY.

The protein localises to the cytoplasm. It carries out the reaction a fatty acyl-[ACP] + phosphate = an acyl phosphate + holo-[ACP]. It functions in the pathway lipid metabolism; phospholipid metabolism. Catalyzes the reversible formation of acyl-phosphate (acyl-PO(4)) from acyl-[acyl-carrier-protein] (acyl-ACP). This enzyme utilizes acyl-ACP as fatty acyl donor, but not acyl-CoA. This chain is Phosphate acyltransferase, found in Enterobacter sp. (strain 638).